Consider the following 69-residue polypeptide: DNA-directed RNA polymerase subunit epsilon (69 aa).

Belongs to the RNA polymerase subunit epsilon family. In terms of assembly, RNAP is composed of a core of 2 alpha, a beta and a beta' subunit. The core is associated with a delta subunit, and at least one of epsilon or omega. When a sigma factor is associated with the core the holoenzyme is formed, which can initiate transcription.

It catalyses the reaction RNA(n) + a ribonucleoside 5'-triphosphate = RNA(n+1) + diphosphate. Its function is as follows. A non-essential component of RNA polymerase (RNAP). This Lysinibacillus sphaericus (strain C3-41) protein is DNA-directed RNA polymerase subunit epsilon.